A 387-amino-acid chain; its full sequence is Zn(2)-C6 fungal-type trascription factor aoiH (387 aa).

The segment at residues 21–48 is a DNA-binding region (zn(2)-C6 fungal-type); sequence CDFCALSKVKCDRGQPQCVRCIKSGIDC. A compositionally biased stretch (polar residues) spans 68–87; it reads VRSTSATTQGTRRKQQTIAQ. The interval 68-94 is disordered; sequence VRSTSATTQGTRRKQQTIAQHSPRRRI.

It is found in the nucleus. Transcription factor; part of the gene cluster that mediates the biosynthesis of a methylated derivative of known natural products orthosporin and diaporthin. Positively regultaes the expression of the non-reducing polyketide synthase aoiG and the O-methyltransferase aoiO. The polypeptide is Zn(2)-C6 fungal-type trascription factor aoiH (Aspergillus oryzae (strain ATCC 42149 / RIB 40) (Yellow koji mold)).